We begin with the raw amino-acid sequence, 464 residues long: UDP-N-acetylmuramoylalanine--D-glutamate ligase (464 aa).

127-133 (GSNGKST) is an ATP binding site.

This sequence belongs to the MurCDEF family.

The protein resides in the cytoplasm. It carries out the reaction UDP-N-acetyl-alpha-D-muramoyl-L-alanine + D-glutamate + ATP = UDP-N-acetyl-alpha-D-muramoyl-L-alanyl-D-glutamate + ADP + phosphate + H(+). Its pathway is cell wall biogenesis; peptidoglycan biosynthesis. In terms of biological role, cell wall formation. Catalyzes the addition of glutamate to the nucleotide precursor UDP-N-acetylmuramoyl-L-alanine (UMA). The sequence is that of UDP-N-acetylmuramoylalanine--D-glutamate ligase from Roseobacter denitrificans (strain ATCC 33942 / OCh 114) (Erythrobacter sp. (strain OCh 114)).